The primary structure comprises 168 residues: Crossover junction endodeoxyribonuclease RuvC (168 aa).

Catalysis depends on residues Asp-9, Glu-70, and Asp-145. Mg(2+)-binding residues include Asp-9, Glu-70, and Asp-145.

Belongs to the RuvC family. In terms of assembly, homodimer which binds Holliday junction (HJ) DNA. The HJ becomes 2-fold symmetrical on binding to RuvC with unstacked arms; it has a different conformation from HJ DNA in complex with RuvA. In the full resolvosome a probable DNA-RuvA(4)-RuvB(12)-RuvC(2) complex forms which resolves the HJ. Requires Mg(2+) as cofactor.

It localises to the cytoplasm. The catalysed reaction is Endonucleolytic cleavage at a junction such as a reciprocal single-stranded crossover between two homologous DNA duplexes (Holliday junction).. Its function is as follows. The RuvA-RuvB-RuvC complex processes Holliday junction (HJ) DNA during genetic recombination and DNA repair. Endonuclease that resolves HJ intermediates. Cleaves cruciform DNA by making single-stranded nicks across the HJ at symmetrical positions within the homologous arms, yielding a 5'-phosphate and a 3'-hydroxyl group; requires a central core of homology in the junction. The consensus cleavage sequence is 5'-(A/T)TT(C/G)-3'. Cleavage occurs on the 3'-side of the TT dinucleotide at the point of strand exchange. HJ branch migration catalyzed by RuvA-RuvB allows RuvC to scan DNA until it finds its consensus sequence, where it cleaves and resolves the cruciform DNA. This is Crossover junction endodeoxyribonuclease RuvC from Chlamydia caviae (strain ATCC VR-813 / DSM 19441 / 03DC25 / GPIC) (Chlamydophila caviae).